The primary structure comprises 862 residues: Interleukin-12 receptor subunit beta-2 (862 aa).

Residues 1–23 (MAHTFRGCSLAFMFIITWLLIKA) form the signal peptide. The Extracellular portion of the chain corresponds to 24 to 622 (KIDACKRGDV…REFCLQGKAN (599 aa)). N-linked (GlcNAc...) asparagine glycans are attached at residues N48, N129, N166, N195, and N271. Fibronectin type-III domains lie at 126–221 (QPQN…FLDI), 226–319 (PPWD…TPEE), 320–419 (EPTG…LCEA), 423–520 (APRQ…KHKA), and 521–620 (PLSG…LQGK). A WSXWS motif motif is present at residues 305–309 (WSDWS). N-linked (GlcNAc...) asparagine glycosylation is found at N347, N376, and N480. The chain crosses the membrane as a helical span at residues 623–643 (WMAFVAPSICIAIIMVGIFST). Residues 644-862 (HYFQQKVFVL…LKMRCDSLML (219 aa)) are Cytoplasmic-facing. The Box 1 motif signature appears at 662-670 (CSREIPDPA). Residues 725–755 (NWPQREKGIQGHQASEKDMMHSASSPPPPRA) form a disordered region. Residues 728-744 (QREKGIQGHQASEKDMM) show a composition bias toward basic and acidic residues. The segment at 796 to 801 (THDGYL) is required for STAT4 binding. Y800 is subject to Phosphotyrosine.

This sequence belongs to the type I cytokine receptor family. Type 2 subfamily. As to quaternary structure, heterodimer/heterooligomer; disulfide-linked. The functional high affinity IL12 receptor is composed of I12RB1 and IL12RB2. Il12RB2 binds JAK2 (via its N-terminal) through a membrane-proximal region of the cytoplasmic domain. Interaction, in vitro and in vivo, with SOCS3 (via its SH2 domain) inhibits the STAT4-mediated activation. Binds STAT4 through a membrane-distal C-terminal region. In terms of processing, on IL12 binding, phosphorylated on C-terminal tyrosine residues by JAK2. Phosphorylation on Tyr-800 is required for STAT4 binding and activation, and for SOCS3 binding. Isoform 2 is expressed at similar levels in both naive and activated T-cells.

It localises to the membrane. In terms of biological role, receptor for interleukin-12. This subunit is the signaling component coupling to the JAK2/STAT4 pathway. Promotes the proliferation of T-cells as well as NK cells. Induces the promotion of T-cells towards the Th1 phenotype by strongly enhancing IFN-gamma production. This Homo sapiens (Human) protein is Interleukin-12 receptor subunit beta-2 (IL12RB2).